We begin with the raw amino-acid sequence, 42 residues long: Capsid protein G8P (42 aa).

Residues 1–12 (MGDILTGVSGAE) are Periplasmic-facing. A helical transmembrane segment spans residues 13–34 (AATAMIAAAAIIALVGFTKWGA). The Cytoplasmic segment spans residues 35 to 42 (KKVASFFG).

Belongs to the inovirus capsid protein family. Homomultimerizes. There are several thousands of this protein in the phage capsid.

Its subcellular location is the virion. It is found in the host membrane. Functionally, self assembles to form a helical capsid wrapping up the viral genomic DNA. The capsid displays a filamentous structure with a length of 760-1950 nm and a width of 6-8 nm. The virion assembly and budding take place at the host inner membrane. This Xanthomonas phage phiLf (Bacteriophage phi-Lf) protein is Capsid protein G8P (VIII).